The following is a 376-amino-acid chain: C-type lectin domain family 4 member M (376 aa).

The Cytoplasmic portion of the chain corresponds to 1–49 (MSDSKEPRVQQLGLLEEDPTTSGIRLFPRDFQFQQIHGHKSSTGCLGHG). An Endocytosis signal motif is present at residues 14–15 (LL). Residues 50-70 (ALVLQLLSFTLLAGVLVAILV) traverse the membrane as a helical; Signal-anchor for type II membrane protein segment. The Extracellular segment spans residues 71-376 (QVSKVPSSLS…KKPTVCFRDE (306 aa)). N92 is a glycosylation site (N-linked (GlcNAc...) asparagine). A run of 6 repeats spans residues 108 to 130 (KLQE…PEKS), 131 to 153 (KLQE…PEKS), 154 to 176 (KLQE…PEKS), 177 to 199 (KLQE…PEKS), 200 to 222 (KLQE…PDQS), and 223 to 245 (KQQQ…CRHC). A 6 X approximate tandem repeats region spans residues 108–246 (KLQEIYQELT…AFERLCRHCP (139 aa)). Disulfide bonds link C242-C372, C245-C256, C273-C366, and C345-C358. The C-type lectin domain maps to 251–367 (FFQGNCYFMS…CDVDNYWICK (117 aa)). Residues E336, N338, S340, E343, N354, and D355 each coordinate Ca(2+). A glycan (N-linked (GlcNAc...) asparagine) is linked at N338.

As to quaternary structure, homotetramer.

It is found in the membrane. Its function is as follows. Probable pathogen-recognition receptor involved in peripheral immune surveillance in liver. May mediate the endocytosis of pathogens which are subsequently degraded in lysosomal compartments. Probably recognizes in a calcium-dependent manner high mannose N-linked oligosaccharides in a variety of pathogen antigens. Is a receptor for ICAM3, probably by binding to mannose-like carbohydrates. The polypeptide is C-type lectin domain family 4 member M (CLEC4M) (Gorilla gorilla gorilla (Western lowland gorilla)).